We begin with the raw amino-acid sequence, 219 residues long: Adenylate kinase (219 aa).

10 to 15 is an ATP binding site; that stretch reads GAGKGT. The segment at 30–59 is NMP; that stretch reads STGDMLRAAVKAGTPLGQQAKKVMDAGELV. AMP-binding positions include T31, R36, 57-59, 85-88, and Q92; these read ELV and GFPR. The LID stretch occupies residues 122 to 159; sequence GRRVHPGSGRVYHVEHNPPKEEGKDDVTGEPLVQRDDD. ATP contacts are provided by residues R123 and 132 to 133; that span reads VY. Positions 129–152 are disordered; it reads SGRVYHVEHNPPKEEGKDDVTGEP. Basic and acidic residues predominate over residues 133 to 152; the sequence is YHVEHNPPKEEGKDDVTGEP. The AMP site is built by R156 and R167. Residue G203 coordinates ATP.

The protein belongs to the adenylate kinase family. In terms of assembly, monomer.

The protein localises to the cytoplasm. It carries out the reaction AMP + ATP = 2 ADP. The protein operates within purine metabolism; AMP biosynthesis via salvage pathway; AMP from ADP: step 1/1. Its function is as follows. Catalyzes the reversible transfer of the terminal phosphate group between ATP and AMP. Plays an important role in cellular energy homeostasis and in adenine nucleotide metabolism. The sequence is that of Adenylate kinase from Alkalilimnicola ehrlichii (strain ATCC BAA-1101 / DSM 17681 / MLHE-1).